The following is a 272-amino-acid chain: ATP synthase subunit a (272 aa).

6 helical membrane passes run 41 to 61 (VLNIDSIIFSLVLGCFFLSIF), 110 to 130 (FVWVFLMNLMDLIPIDFFPFI), 143 to 165 (VPSADINITLSMSLGVFILILFY), 188 to 208 (VFFIFNFLLELVSLLSKPISL), 222 to 242 (IFILIAGLLPWWSQFFLNVPW), and 243 to 263 (AIFHILIISLQAFIFMVLTIV).

This sequence belongs to the ATPase A chain family. As to quaternary structure, F-type ATPases have 2 components, CF(1) - the catalytic core - and CF(0) - the membrane proton channel. CF(1) has five subunits: alpha(3), beta(3), gamma(1), delta(1), epsilon(1). CF(0) has three main subunits: a(1), b(2) and c(9-12). The alpha and beta chains form an alternating ring which encloses part of the gamma chain. CF(1) is attached to CF(0) by a central stalk formed by the gamma and epsilon chains, while a peripheral stalk is formed by the delta and b chains.

The protein localises to the cell membrane. Key component of the proton channel; it plays a direct role in the translocation of protons across the membrane. The polypeptide is ATP synthase subunit a (Buchnera aphidicola subsp. Schizaphis graminum (strain Sg)).